We begin with the raw amino-acid sequence, 325 residues long: Polyprenyl transferase mpaA (325 aa).

Helical transmembrane passes span 27-47 (MPYY…ALKL), 56-76 (VEYI…LCGA), and 108-128 (VEAL…LDLI). A glycan (N-linked (GlcNAc...) asparagine) is linked at Asn131. Helical transmembrane passes span 134 to 151 (IWGL…YPYL), 159 to 179 (VFIY…ITGW), 192 to 212 (IFTH…YFNT), 240 to 260 (LFLA…VLKI), 262 to 282 (SPWL…MQIV), and 295 to 315 (IHWD…VEVG).

The protein belongs to the UbiA prenyltransferase family. It depends on Mg(2+) as a cofactor.

It localises to the golgi apparatus membrane. The catalysed reaction is 5,7-dihydroxy-4-methylphthalide + (2E,6E)-farnesyl diphosphate = 4-farnesyl-3,5-dihydroxy-6-methylphthalide + diphosphate. It participates in secondary metabolite biosynthesis; terpenoid biosynthesis. Functionally, polyprenyl transferase; part of the gene cluster that mediates the biosynthesis of mycophenolic acid (MPA), the first isolated antibiotic natural product in the world obtained from a culture of Penicillium brevicompactum in 1893. MpaA is a Golgi apparatus-associated enzyme that catalyzes the prenylation of 5,7-dihydroxy-4,6-dimethylphthalide (DHMP) to yield farnesyl-DHMP (FDHMP). The first step of the pathway is the synthesis of 5-methylorsellinic acid (5MOA) by the cytosolic polyketide synthase mpaC. 5MOA is then converted to the phthalide compound 5,7-dihydroxy-4,6-dimethylphthalide (DHMP) by the endoplasmic reticulum-bound cytochrome P450 monooxygenase mpaDE. MpaDE first catalyzes hydroxylation of 5-MOA to 4,6-dihydroxy-2-(hydroxymethyl)-3-methylbenzoic acid (DHMB). MpaDE then acts as a lactone synthase that catalyzes the ring closure to convert DHMB into DHMP. The next step is the prenylation of DHMP by the Golgi apparatus-associated prenyltransferase mpaA to yield farnesyl-DHMP (FDHMP). The ER-bound oxygenase mpaB then mediates the oxidative cleavage the C19-C20 double bond in FDHMP to yield FDHMP-3C via a mycophenolic aldehyde intermediate. The O-methyltransferase mpaG catalyzes the methylation of FDHMP-3C to yield MFDHMP-3C. After the cytosolic methylation of FDHMP-3C, MFDHMP-3C enters into peroxisomes probably via free diffusion due to its low molecular weight. Upon a peroxisomal CoA ligation reaction, catalyzed by a beta-oxidation component enzyme acyl-CoA ligase ACL891, MFDHMP-3C-CoA would then be restricted to peroxisomes for the following beta-oxidation pathway steps. The peroxisomal beta-oxidation machinery than converts MFDHMP-3C-CoA into MPA_CoA, via a beta-oxidation chain-shortening process. Finally mpaH acts as a peroxisomal acyl-CoA hydrolase with high substrate specificity toward MPA-CoA to release the final product MPA. In Penicillium roqueforti (strain FM164), this protein is Polyprenyl transferase mpaA.